A 650-amino-acid chain; its full sequence is 1-deoxy-D-xylulose-5-phosphate synthase (650 aa).

Residues His-73 and 113–115 (SHA) each bind thiamine diphosphate. Asp-145 provides a ligand contact to Mg(2+). Thiamine diphosphate is bound by residues 146–147 (GA), Asn-175, Tyr-287, and Glu-369. Residue Asn-175 coordinates Mg(2+).

It belongs to the transketolase family. DXPS subfamily. In terms of assembly, homodimer. The cofactor is Mg(2+). Requires thiamine diphosphate as cofactor.

The catalysed reaction is D-glyceraldehyde 3-phosphate + pyruvate + H(+) = 1-deoxy-D-xylulose 5-phosphate + CO2. It functions in the pathway metabolic intermediate biosynthesis; 1-deoxy-D-xylulose 5-phosphate biosynthesis; 1-deoxy-D-xylulose 5-phosphate from D-glyceraldehyde 3-phosphate and pyruvate: step 1/1. Its function is as follows. Catalyzes the acyloin condensation reaction between C atoms 2 and 3 of pyruvate and glyceraldehyde 3-phosphate to yield 1-deoxy-D-xylulose-5-phosphate (DXP). This is 1-deoxy-D-xylulose-5-phosphate synthase from Leifsonia xyli subsp. xyli (strain CTCB07).